A 756-amino-acid chain; its full sequence is 1-phosphatidylinositol 4,5-bisphosphate phosphodiesterase delta-1 (756 aa).

A PH domain is found at 21 to 130 (ALLKGSQLLK…WVLGLHKIIH (110 aa)). The segment at 30–57 (KVKSSSWRRERFYKLQEDCKTIWQESRK) is substrate binding. 2 consecutive EF-hand domains span residues 140-175 (KLQH…LNIQ) and 176-211 (VDDS…LTQR). Residues aspartate 153, asparagine 155, aspartate 157, lysine 159, glutamate 164, aspartate 189, serine 191, threonine 193, serine 195, and glutamate 200 each contribute to the Ca(2+) site. A glycan (O-linked (GlcNAc) serine) is linked at serine 191. Threonine 193 is a glycosylation site (O-linked (GlcNAc) threonine). A PI-PLC X-box domain is found at 296-440 (QDMGQPLSHY…LKGKILLKGK (145 aa)). Histidine 311 is an active-site residue. Positions 312, 341, and 343 each coordinate Ca(2+). Residue histidine 356 is part of the active site. Glutamate 390 contacts Ca(2+). 2 residues coordinate substrate: lysine 438 and lysine 440. Threonine 457 is subject to Phosphothreonine. Serine 460 carries the phosphoserine modification. Residues 492–609 (LSDMVIYCKS…GYVLKPAFLR (118 aa)) form the PI-PLC Y-box domain. Substrate contacts are provided by serine 522 and arginine 549. The C2 domain occupies 611–737 (PNGTFNPRAL…QGYRHVHLMS (127 aa)). Ca(2+)-binding residues include isoleucine 651, aspartate 653, asparagine 677, aspartate 706, tyrosine 707, and aspartate 708.

As to quaternary structure, interacts with TGM2. The cofactor is Ca(2+). In terms of tissue distribution, strongly expressed in lung, liver and heart. Also expressed at least in pancreas, kidney, skeletal muscle, placenta and brain.

It catalyses the reaction a 1,2-diacyl-sn-glycero-3-phospho-(1D-myo-inositol-4,5-bisphosphate) + H2O = 1D-myo-inositol 1,4,5-trisphosphate + a 1,2-diacyl-sn-glycerol + H(+). It carries out the reaction a 1,2-diacyl-sn-glycero-3-phospho-(1D-myo-inositol) + H2O = 1D-myo-inositol 1-phosphate + a 1,2-diacyl-sn-glycerol + H(+). Its function is as follows. The production of the second messenger molecules diacylglycerol (DAG) and inositol 1,4,5-trisphosphate (IP3) is mediated by activated phosphatidylinositol-specific phospholipase C enzymes. Essential for trophoblast and placental development. Binds phosphatidylinositol 4,5-bisphosphate. The polypeptide is 1-phosphatidylinositol 4,5-bisphosphate phosphodiesterase delta-1 (Homo sapiens (Human)).